Reading from the N-terminus, the 568-residue chain is Urease subunit beta (568 aa).

The region spanning 131-568 is the Urease domain; sequence GGIDTHIHFI…LSLAQLYNLF (438 aa). Ni(2+) contacts are provided by histidine 136, histidine 138, and lysine 219. Lysine 219 carries the post-translational modification N6-carboxylysine. Residue histidine 221 participates in substrate binding. Ni(2+)-binding residues include histidine 248 and histidine 274. The Proton donor role is filled by histidine 321. Ni(2+) is bound at residue aspartate 361.

The protein belongs to the metallo-dependent hydrolases superfamily. Urease alpha subunit family. In terms of assembly, heterohexamer of 3 UreA (alpha) and 3 UreB (beta) subunits. The cofactor is Ni cation. Carboxylation allows a single lysine to coordinate two nickel ions.

It is found in the cytoplasm. It carries out the reaction urea + 2 H2O + H(+) = hydrogencarbonate + 2 NH4(+). It functions in the pathway nitrogen metabolism; urea degradation; CO(2) and NH(3) from urea (urease route): step 1/1. This Helicobacter heilmannii protein is Urease subunit beta.